The following is a 100-amino-acid chain: Large ribosomal subunit protein uL23 (100 aa).

Belongs to the universal ribosomal protein uL23 family. In terms of assembly, part of the 50S ribosomal subunit. Contacts protein L29, and trigger factor when it is bound to the ribosome.

Its function is as follows. One of the early assembly proteins it binds 23S rRNA. One of the proteins that surrounds the polypeptide exit tunnel on the outside of the ribosome. Forms the main docking site for trigger factor binding to the ribosome. This Escherichia coli O157:H7 protein is Large ribosomal subunit protein uL23.